A 187-amino-acid chain; its full sequence is Large ribosomal subunit protein uL22 (187 aa).

The protein belongs to the universal ribosomal protein uL22 family.

This chain is Large ribosomal subunit protein uL22 (RPL17), found in Theileria annulata.